The following is a 258-amino-acid chain: Type III pantothenate kinase (258 aa).

Position 6–13 (6–13 (DIGNTNTV)) interacts with ATP. Substrate is bound by residues tyrosine 100 and 107–110 (GADR). The Proton acceptor role is filled by aspartate 109. Aspartate 129 provides a ligand contact to K(+). Threonine 132 contributes to the ATP binding site. Residue threonine 185 participates in substrate binding.

The protein belongs to the type III pantothenate kinase family. Homodimer. It depends on NH4(+) as a cofactor. K(+) is required as a cofactor.

It is found in the cytoplasm. The catalysed reaction is (R)-pantothenate + ATP = (R)-4'-phosphopantothenate + ADP + H(+). Its pathway is cofactor biosynthesis; coenzyme A biosynthesis; CoA from (R)-pantothenate: step 1/5. Its function is as follows. Catalyzes the phosphorylation of pantothenate (Pan), the first step in CoA biosynthesis. This chain is Type III pantothenate kinase, found in Syntrophobacter fumaroxidans (strain DSM 10017 / MPOB).